A 203-amino-acid chain; its full sequence is Translation initiation factor IF-3 (203 aa).

Belongs to the IF-3 family. In terms of assembly, monomer.

It is found in the cytoplasm. In terms of biological role, IF-3 binds to the 30S ribosomal subunit and shifts the equilibrium between 70S ribosomes and their 50S and 30S subunits in favor of the free subunits, thus enhancing the availability of 30S subunits on which protein synthesis initiation begins. The polypeptide is Translation initiation factor IF-3 (Corynebacterium efficiens (strain DSM 44549 / YS-314 / AJ 12310 / JCM 11189 / NBRC 100395)).